The primary structure comprises 356 residues: S-adenosylmethionine:tRNA ribosyltransferase-isomerase (356 aa).

The protein belongs to the QueA family. In terms of assembly, monomer.

It localises to the cytoplasm. The enzyme catalyses 7-aminomethyl-7-carbaguanosine(34) in tRNA + S-adenosyl-L-methionine = epoxyqueuosine(34) in tRNA + adenine + L-methionine + 2 H(+). It participates in tRNA modification; tRNA-queuosine biosynthesis. Its function is as follows. Transfers and isomerizes the ribose moiety from AdoMet to the 7-aminomethyl group of 7-deazaguanine (preQ1-tRNA) to give epoxyqueuosine (oQ-tRNA). This chain is S-adenosylmethionine:tRNA ribosyltransferase-isomerase, found in Nitrosospira multiformis (strain ATCC 25196 / NCIMB 11849 / C 71).